The sequence spans 236 residues: Ribosome assembly factor mrt4 (236 aa).

This sequence belongs to the universal ribosomal protein uL10 family. As to quaternary structure, associates with the pre-60S ribosomal particle.

Its subcellular location is the nucleus. It is found in the nucleolus. The protein resides in the cytoplasm. Its function is as follows. Component of the ribosome assembly machinery. Nuclear paralog of the ribosomal protein P0, it binds pre-60S subunits at an early stage of assembly in the nucleolus, and is replaced by P0 in cytoplasmic pre-60S subunits and mature 80S ribosomes. The sequence is that of Ribosome assembly factor mrt4 from Eremothecium gossypii (strain ATCC 10895 / CBS 109.51 / FGSC 9923 / NRRL Y-1056) (Yeast).